Consider the following 269-residue polypeptide: 4-hydroxy-tetrahydrodipicolinate reductase (269 aa).

NAD(+) contacts are provided by residues 10 to 15, Glu36, 99 to 101, and 123 to 126; these read GANGRM, GTT, and AANF. The Proton donor/acceptor role is filled by His156. Residue His157 coordinates (S)-2,3,4,5-tetrahydrodipicolinate. Lys160 (proton donor) is an active-site residue. (S)-2,3,4,5-tetrahydrodipicolinate is bound at residue 166–167; sequence GT.

This sequence belongs to the DapB family.

The protein resides in the cytoplasm. The catalysed reaction is (S)-2,3,4,5-tetrahydrodipicolinate + NAD(+) + H2O = (2S,4S)-4-hydroxy-2,3,4,5-tetrahydrodipicolinate + NADH + H(+). The enzyme catalyses (S)-2,3,4,5-tetrahydrodipicolinate + NADP(+) + H2O = (2S,4S)-4-hydroxy-2,3,4,5-tetrahydrodipicolinate + NADPH + H(+). It participates in amino-acid biosynthesis; L-lysine biosynthesis via DAP pathway; (S)-tetrahydrodipicolinate from L-aspartate: step 4/4. Functionally, catalyzes the conversion of 4-hydroxy-tetrahydrodipicolinate (HTPA) to tetrahydrodipicolinate. This Neisseria meningitidis serogroup B (strain ATCC BAA-335 / MC58) protein is 4-hydroxy-tetrahydrodipicolinate reductase.